The primary structure comprises 1006 residues: Probable beta-galactosidase A (1006 aa).

Positions 1 to 18 (MKLLSVCAIALLAAQAAG) are cleaved as a signal peptide. 4 residues coordinate substrate: Tyr96, Asn140, Ala141, and Glu142. Asn156 carries N-linked (GlcNAc...) asparagine glycosylation. Asn199 contributes to the substrate binding site. Glu200 (proton donor) is an active-site residue. Cys205 and Cys206 are disulfide-bonded. Position 260 (Tyr260) interacts with substrate. Residues Cys266 and Cys315 are joined by a disulfide bond. Catalysis depends on Glu298, which acts as the Nucleophile. Tyr364 lines the substrate pocket. 7 N-linked (GlcNAc...) asparagine glycosylation sites follow: Asn373, Asn402, Asn422, Asn622, Asn760, Asn777, and Asn914.

This sequence belongs to the glycosyl hydrolase 35 family.

The protein localises to the secreted. It carries out the reaction Hydrolysis of terminal non-reducing beta-D-galactose residues in beta-D-galactosides.. Its function is as follows. Cleaves beta-linked terminal galactosyl residues from gangliosides, glycoproteins, and glycosaminoglycans. This is Probable beta-galactosidase A (lacA) from Aspergillus fumigatus (strain CBS 144.89 / FGSC A1163 / CEA10) (Neosartorya fumigata).